The primary structure comprises 703 residues: Leucine zipper putative tumor suppressor 3 (703 aa).

Disordered stretches follow at residues 1-22, 40-190, and 204-347; these read MAPADLASEGPKLEDPPAPHLF, RADP…SEPL, and FHSM…PPSP. Residues 96–107 show a composition bias toward low complexity; sequence GSFPGPRSSGSG. Residues 109–124 are compositionally biased toward basic and acidic residues; the sequence is NRERPGPGRYPSEDKV. Positions 205–218 are enriched in polar residues; that stretch reads HSMQNLCPPQTNGT. Residues 251–268 show a composition bias toward low complexity; the sequence is DSGRNSLTSLPTYSSSYS. Residues 290–299 show a composition bias toward gly residues; that stretch reads SSGGGGGGSG. Positions 304-324 are enriched in low complexity; the sequence is GTSDSGRASSKSGSSSSMGRS. Over residues 325-336 the composition is skewed to gly residues; sequence GHLGSGEGGNGG. 2 positions are modified to phosphoserine: S346 and S348. Coiled-coil stretches lie at residues 348–526 and 600–669; these read SALI…SLRD and TRAL…RLRE. The interval 665–703 is disordered; the sequence is RRLRERGAAGGSRTPTPQHGEEEKAWTPSRLERIESTEI. The segment covering 683–703 has biased composition (basic and acidic residues); it reads HGEEEKAWTPSRLERIESTEI.

The protein belongs to the LZTS3 family. Interacts (via C-terminus) with SHANK3 (via PDZ domain). Interacts (via coiled coil) with SIPA1L1. Can form homooligomers. Detected in brain, with highest expression in brain cortex, caudate putamen, cerebellum and hippocampus. Detected in neuropil (at protein level). Detected in brain and kidney.

Its subcellular location is the synapse. It localises to the postsynaptic density. It is found in the cell projection. The protein resides in the dendritic spine. The protein localises to the dendrite. Its subcellular location is the cytoplasm. It localises to the cytoskeleton. May be involved in promoting the maturation of dendritic spines, probably via regulating SIPA1L1 levels at the postsynaptic density of synapses. This is Leucine zipper putative tumor suppressor 3 from Rattus norvegicus (Rat).